The chain runs to 377 residues: MTMKRAIGLMSGTSLDGIDVALIESDGESIRIVKSANGFIAPLGPTGYRGYREDEKTLLREATRDAEGIRARADRPGRLPQAEDFVTHAHAEAIEAFLAENGLSPADIDVVGFHGQTVIHRPKLGLTVQIGDGAALARRLGIRVVSDMRADDVAQGGQGAPLVPVFHKALAEAAGFAGPLGILNIGGLANATLIDSSGNMLAFDTGPGNGPINDWMKERTGRDLDEDGATAARGTVDKDLLENLLGHPLILRQPPKSLDRNWFSHRLAGYLTIEDGAATLTAFTAHAVARSLAFASERPTRWIVGGGGAKNRTLMTMLERLLKAEVLNADAIGWSSDFLEAQAFAYLALRALEGLPLTYPTTTGVSEPVTGGLVSEP.

12–19 (GTSLDGID) serves as a coordination point for ATP.

This sequence belongs to the anhydro-N-acetylmuramic acid kinase family.

The enzyme catalyses 1,6-anhydro-N-acetyl-beta-muramate + ATP + H2O = N-acetyl-D-muramate 6-phosphate + ADP + H(+). Its pathway is amino-sugar metabolism; 1,6-anhydro-N-acetylmuramate degradation. The protein operates within cell wall biogenesis; peptidoglycan recycling. Its function is as follows. Catalyzes the specific phosphorylation of 1,6-anhydro-N-acetylmuramic acid (anhMurNAc) with the simultaneous cleavage of the 1,6-anhydro ring, generating MurNAc-6-P. Is required for the utilization of anhMurNAc either imported from the medium or derived from its own cell wall murein, and thus plays a role in cell wall recycling. In Methylorubrum populi (strain ATCC BAA-705 / NCIMB 13946 / BJ001) (Methylobacterium populi), this protein is Anhydro-N-acetylmuramic acid kinase.